The following is a 462-amino-acid chain: Probable serine/threonine-protein kinase DDB_G0286841 (462 aa).

Residues 64–358 (FNFLKVISKG…VDEVKCHPFF (295 aa)) form the Protein kinase domain. Residues 70 to 78 (ISKGGFGKV) and K93 each bind ATP. Catalysis depends on D188, which acts as the Proton acceptor. The region spanning 359 to 462 (SEINWKIYED…LFIDFDFPTY (104 aa)) is the AGC-kinase C-terminal domain. A compositionally biased stretch (low complexity) spans 414-439 (NIYKNNNNNNNNNNNNNNNNNNNNNN). Residues 414–447 (NIYKNNNNNNNNNNNNNNNNNNNNNNDDNDDENN) form a disordered region.

The protein belongs to the protein kinase superfamily. AGC Ser/Thr protein kinase family.

It catalyses the reaction L-seryl-[protein] + ATP = O-phospho-L-seryl-[protein] + ADP + H(+). The enzyme catalyses L-threonyl-[protein] + ATP = O-phospho-L-threonyl-[protein] + ADP + H(+). The chain is Probable serine/threonine-protein kinase DDB_G0286841 from Dictyostelium discoideum (Social amoeba).